A 419-amino-acid chain; its full sequence is WD repeat-containing protein JIP5 (419 aa).

WD repeat units lie at residues 4–45, 66–105, 108–147, 180–220, 224–263, 268–308, and 351–390; these read ALSS…HNQS, PSHK…VKAR, RAHE…EGDA, DQED…KGVE, DQED…LDHA, GHPS…GIVG, and DAAE…QPPP. The tract at residues 172-192 is disordered; it reads DPPRSKKKDQEDDLKRKRDEE. The tract at residues 372–408 is disordered; it reads SADGSDESAGESDVMQPPPATKRRTAKSKAGKKSVHD. Positions 392–404 are enriched in basic residues; that stretch reads TKRRTAKSKAGKK.

This sequence belongs to the WD repeat WDR55 family.

It is found in the nucleus. Its subcellular location is the nucleolus. In Malassezia globosa (strain ATCC MYA-4612 / CBS 7966) (Dandruff-associated fungus), this protein is WD repeat-containing protein JIP5 (JIP5).